Here is a 529-residue protein sequence, read N- to C-terminus: Glucose-6-phosphate isomerase (529 aa).

Catalysis depends on Glu-322, which acts as the Proton donor. Residues His-351 and Lys-455 contribute to the active site.

The protein belongs to the GPI family.

It localises to the cytoplasm. It carries out the reaction alpha-D-glucose 6-phosphate = beta-D-fructose 6-phosphate. Its pathway is carbohydrate biosynthesis; gluconeogenesis. It participates in carbohydrate degradation; glycolysis; D-glyceraldehyde 3-phosphate and glycerone phosphate from D-glucose: step 2/4. Functionally, catalyzes the reversible isomerization of glucose-6-phosphate to fructose-6-phosphate. This is Glucose-6-phosphate isomerase from Acaryochloris marina (strain MBIC 11017).